Consider the following 428-residue polypeptide: Histidinol dehydrogenase (428 aa).

Residues Tyr-126, Gln-188, and Asn-211 each contribute to the NAD(+) site. 3 residues coordinate substrate: Ser-234, Gln-256, and His-259. Gln-256 and His-259 together coordinate Zn(2+). Catalysis depends on proton acceptor residues Glu-324 and His-325. Positions 325, 358, 412, and 417 each coordinate substrate. Position 358 (Asp-358) interacts with Zn(2+). His-417 serves as a coordination point for Zn(2+).

Belongs to the histidinol dehydrogenase family. Zn(2+) serves as cofactor.

The catalysed reaction is L-histidinol + 2 NAD(+) + H2O = L-histidine + 2 NADH + 3 H(+). Its pathway is amino-acid biosynthesis; L-histidine biosynthesis; L-histidine from 5-phospho-alpha-D-ribose 1-diphosphate: step 9/9. Catalyzes the sequential NAD-dependent oxidations of L-histidinol to L-histidinaldehyde and then to L-histidine. The sequence is that of Histidinol dehydrogenase from Chlorobium chlorochromatii (strain CaD3).